A 291-amino-acid chain; its full sequence is Peptide methionine sulfoxide reductase MsrB/MsrA (291 aa).

Positions 1-124 (MLANLQHLSD…NSAALRFVAR (124 aa)) constitute a MsrB domain. The active-site Nucleophile is the Cys113. Residues 127–284 (GTALFAAGCF…PGGYCHVSLH (158 aa)) are peptide methionine sulfoxide reductase A. Cys135 is a catalytic residue.

The protein in the N-terminal section; belongs to the MsrB Met sulfoxide reductase family. This sequence in the C-terminal section; belongs to the MsrA Met sulfoxide reductase family.

It carries out the reaction L-methionyl-[protein] + [thioredoxin]-disulfide + H2O = L-methionyl-(R)-S-oxide-[protein] + [thioredoxin]-dithiol. The enzyme catalyses L-methionyl-[protein] + [thioredoxin]-disulfide + H2O = L-methionyl-(S)-S-oxide-[protein] + [thioredoxin]-dithiol. It catalyses the reaction [thioredoxin]-disulfide + L-methionine + H2O = L-methionine (S)-S-oxide + [thioredoxin]-dithiol. Functionally, has an important function as a repair enzyme for proteins that have been inactivated by oxidation. Catalyzes the reversible oxidation-reduction of methionine sulfoxide in proteins to methionine. The protein is Peptide methionine sulfoxide reductase MsrB/MsrA (msrAB) of Treponema pallidum (strain Nichols).